The sequence spans 266 residues: Putative carbamate hydrolase RutD (266 aa).

It belongs to the AB hydrolase superfamily. Hydrolase RutD family.

It catalyses the reaction carbamate + 2 H(+) = NH4(+) + CO2. Functionally, involved in pyrimidine catabolism. May facilitate the hydrolysis of carbamate, a reaction that can also occur spontaneously. In Acinetobacter baylyi (strain ATCC 33305 / BD413 / ADP1), this protein is Putative carbamate hydrolase RutD.